We begin with the raw amino-acid sequence, 86 residues long: Thioredoxin (86 aa).

Catalysis depends on nucleophile residues Cys15 and Cys18. Cys15 and Cys18 are oxidised to a cystine.

Belongs to the glutaredoxin family.

Its function is as follows. Does not function as a glutathione-disulfide oxidoreductase in the presence of glutathione and glutathione reductase. Has low thioredoxin activity in vitro. This Methanocaldococcus jannaschii (strain ATCC 43067 / DSM 2661 / JAL-1 / JCM 10045 / NBRC 100440) (Methanococcus jannaschii) protein is Thioredoxin.